The following is a 707-amino-acid chain: Leukotoxin export ATP-binding protein LtxB (707 aa).

The 122-residue stretch at 4–125 folds into the Peptidase C39 domain; that stretch reads QKNTNLALQA…ERYQSKVILI (122 aa). The active site involves H83. 5 helical membrane-spanning segments follow: residues 158-178, 191-211, 269-289, 295-315, and 387-407; these read LIVSIFLQIFALITPLFFQVV, LNVITVALAIVVLFEIILGGL, ALTSILDLLFSFIFFAVMWYY, LVVLGSLPCYVIWSVFISPIL, and AVMVINLWLGAHLVISGDLSI. Positions 158–436 constitute an ABC transmembrane type-1 domain; the sequence is LIVSIFLQIF…LAQIWQDFQQ (279 aa). Residues 468-703 form the ABC transporter domain; it reads ISFRNIKFRY…EKGLYSYLHQ (236 aa). 502–509 is a binding site for ATP; the sequence is GRSGSGKS.

It belongs to the ABC transporter superfamily. Protein-1 exporter (TC 3.A.1.109) family. In terms of assembly, probably part of a complex composed of LtxB, LtxD and TdeA, which forms a single transport channel across the two membranes.

The protein resides in the cell inner membrane. The enzyme catalyses ATP + H2O + proteinSide 1 = ADP + phosphate + proteinSide 2.. Involved in the export of the LtxA leukotoxin. This Aggregatibacter actinomycetemcomitans (Actinobacillus actinomycetemcomitans) protein is Leukotoxin export ATP-binding protein LtxB.